Reading from the N-terminus, the 681-residue chain is Peroxisomal acyl-coenzyme A oxidase 2 (681 aa).

Phosphoserine is present on S9. 5 positions are modified to N6-succinyllysine: K66, K137, K453, K561, and K667. A Microbody targeting signal motif is present at residues S679–L681.

The protein belongs to the acyl-CoA oxidase family. Homodimer. It depends on FAD as a cofactor. Liver and kidney.

It localises to the peroxisome. The enzyme catalyses (25R)-3alpha,7alpha,12alpha-trihydroxy-5beta-cholestan-26-oyl-CoA + A + H2O = (24R,25R)-3alpha,7alpha,12alpha,24-tetrahydroxy-5beta-cholestan-26-oyl-CoA + AH2. It carries out the reaction (25S)-3alpha,7alpha,12alpha-trihydroxy-5beta-cholestan-26-oyl-CoA + O2 = (24E)-3alpha,7alpha,12alpha-trihydroxy-5beta-cholest-24-en-26-oyl-CoA + H2O2. In terms of biological role, oxidizes the CoA esters of the bile acid intermediates di- and tri-hydroxycholestanoic acids. Capable of oxidizing short as well as long chain 2-methyl branched fatty acids. The polypeptide is Peroxisomal acyl-coenzyme A oxidase 2 (Oryctolagus cuniculus (Rabbit)).